Consider the following 368-residue polypeptide: Histidinol-phosphate aminotransferase (368 aa).

N6-(pyridoxal phosphate)lysine is present on K215.

The protein belongs to the class-II pyridoxal-phosphate-dependent aminotransferase family. Histidinol-phosphate aminotransferase subfamily. In terms of assembly, homodimer. The cofactor is pyridoxal 5'-phosphate.

It carries out the reaction L-histidinol phosphate + 2-oxoglutarate = 3-(imidazol-4-yl)-2-oxopropyl phosphate + L-glutamate. It functions in the pathway amino-acid biosynthesis; L-histidine biosynthesis; L-histidine from 5-phospho-alpha-D-ribose 1-diphosphate: step 7/9. In Buchnera aphidicola subsp. Acyrthosiphon pisum (strain 5A), this protein is Histidinol-phosphate aminotransferase.